Here is a 1273-residue protein sequence, read N- to C-terminus: Cullin-associated NEDD8-dissociated protein 2 (1273 aa).

Ser2 is subject to N-acetylserine. 26 HEAT repeats span residues 2–36 (STGA…LDPL), 37–74 (PWLQ…ELQK), 82–119 (DSER…KVKE), 121–157 (QVEN…ELPP), 167–205 (SVCR…RLGA), 209–246 (TFHA…ACST), 248–284 (LFVE…SVGR), 292–329 (AHLD…KCPK), 364–405 (TEDS…SRPD), 409–446 (DFHC…HTRP), 469–506 (AQVP…VLPG), 554–591 (PHLP…TLWP), 602–641 (PYVG…HLGD), 685–722 (PILA…SQGL), 727–764 (PAVR…TQPA), 768–807 (EVSG…TRPP), 809–850 (VEYS…ALSA), 894–931 (GPQR…GNLP), 933–968 (FLPF…DNLK), 970–1003 (YVED…LVFV), 1004–1040 (NPPF…DQPH), 1044–1081 (PLLK…NKPS), 1085–1121 (DLLD…DDGL), 1142–1178 (LDIC…LCPA), 1194–1231 (TCTA…NPEV), and 1241–1273 (STQI…MELS). The disordered stretch occupies residues 352-383 (YNHDSDEEEQMETEDSEFSEQESEDEYSDDDD). Positions 356-383 (SDEEEQMETEDSEFSEQESEDEYSDDDD) are enriched in acidic residues.

This sequence belongs to the CAND family. Binds TBP, CNOT3 and UBE3C. Ubiquitinated and targeted for proteasomal degradation. Detected in heart and skeletal muscle.

It is found in the nucleus. In terms of biological role, probable assembly factor of SCF (SKP1-CUL1-F-box protein) E3 ubiquitin ligase complexes that promotes the exchange of the substrate-recognition F-box subunit in SCF complexes, thereby playing a key role in the cellular repertoire of SCF complexes. The chain is Cullin-associated NEDD8-dissociated protein 2 (Cand2) from Rattus norvegicus (Rat).